We begin with the raw amino-acid sequence, 201 residues long: MSGKSLLLKVILLGDGGVGKSSLMNRYVTNKFDSQAFHTIGVEFLNRDLEVDGRFVTLQIWDTAGQERFKSLRTPFYRGADCCLLTFSVDDRQSFENLGNWQKEFIYYADVKDPEHFPFVVLGNKVDKEDRQVTTEEAQAWCMENGDYPYLETSAKDDTNVTVAFEEAVRQVLAVEEQLEHCMLGHTIDLNSGSKAGSSCC.

Positions 18, 19, 20, 21, 22, 33, 34, 36, 38, and 39 each coordinate GTP. Residue S21 participates in Mg(2+) binding. Residues 31–42 carry the Switch 1 motif; the sequence is KFDSQAFHTIGV. Position 34 is a phosphoserine (S34). Positions 39 and 62 each coordinate Mg(2+). A Switch 2 motif is present at residues 64–78; it reads AGQERFKSLRTPFYR. GTP-binding residues include G65, N124, K125, A155, and K156. Residues C200 and C201 are each lipidated (S-geranylgeranyl cysteine).

It belongs to the small GTPase superfamily. Rab family. In terms of assembly, interacts (GTP-bound form) with SGSM1; the GDP-bound form has much lower affinity for SGSM1. The GTP-bound form but not the GDP-bound form interacts with HPS4 and the BLOC-3 complex (heterodimer of HPS1 and HPS4) but does not interact with HPS1 alone. Interacts (GTP-bound form) with NDE1. Mg(2+) is required as a cofactor.

The protein localises to the cell membrane. The protein resides in the cytoplasmic vesicle. Its subcellular location is the phagosome membrane. The enzyme catalyses GTP + H2O = GDP + phosphate + H(+). Its activity is regulated as follows. Regulated by guanine nucleotide exchange factors (GEFs) which promote the exchange of bound GDP for free GTP. Regulated by GTPase activating proteins (GAPs) which increase the GTP hydrolysis activity. Inhibited by GDP dissociation inhibitors (GDIs). The small GTPases Rab are key regulators of intracellular membrane trafficking, from the formation of transport vesicles to their fusion with membranes. Rabs cycle between an inactive GDP-bound form and an active GTP-bound form that is able to recruit to membranes different sets of downstream effectors directly responsible for vesicle formation, movement, tethering and fusion. RAB9B is involved in the transport of proteins between the endosomes and the trans Golgi network. May use NDE1/NDEL1 as an effector to interact with the dynein motor complex in order to control retrograde trafficking of RAB9-associated late endosomes to the TGN. The polypeptide is Ras-related protein Rab-9B (RAB9B) (Pongo abelii (Sumatran orangutan)).